Reading from the N-terminus, the 1179-residue chain is Protein turtle homolog A (1179 aa).

Residues 1 to 20 form the signal peptide; the sequence is MIWCLRLTILSLILSQGADG. Over 21 to 734 the chain is Extracellular; sequence RRKPEVVSVV…TQLPGLLPQP (714 aa). Ig-like domains follow at residues 24 to 124, 136 to 216, 226 to 318, 322 to 410, and 418 to 498; these read PEVV…DFAN, PQFQ…GSVT, PPVI…AYLT, PAQV…SPVT, and PAFI…VTIS. 5 cysteine pairs are disulfide-bonded: Cys-41-Cys-108, Cys-158-Cys-206, Cys-248-Cys-301, Cys-344-Cys-395, and Cys-440-Cys-486. N-linked (GlcNAc...) asparagine glycosylation is present at Asn-188. 2 Fibronectin type-III domains span residues 507-611 and 623-718; these read SPHV…TTPA and PLSP…TSGL. N-linked (GlcNAc...) asparagine glycosylation is found at Asn-513 and Asn-524. The helical transmembrane segment at 735-755 threads the bilayer; it reads VLAGVVGGVCFLGVAVLVSIL. Residues 756–1179 are Cytoplasmic-facing; that stretch reads AACLMNRRRA…ISYPEQATLL (424 aa). Residues 766–807 are disordered; sequence ARRHRKRLRQDPPLIFSPRGRSGPHSAPGSDSPDSVTKFKLQ. Ser-809 bears the Phosphoserine mark. Disordered stretches follow at residues 819 to 846, 869 to 895, 942 to 979, and 1016 to 1079; these read LWGE…EPIC, ERSE…SGVP, PPLE…NLRA, and APRG…KRRN. Over residues 884–893 the composition is skewed to polar residues; that stretch reads LDCSSSSPSG. Over residues 1020–1029 the composition is skewed to polar residues; it reads SLTSQSSGRG. The PDZ-binding motif lies at 1177-1179; that stretch reads TLL.

Belongs to the immunoglobulin superfamily. Turtle family. As to quaternary structure, interacts with SHANK1 and probably with MAGI2. Expressed in hippocampal neurons (at protein level).

Its subcellular location is the cell membrane. The protein resides in the synapse. Functions in dendrite outgrowth and synapse maturation. The sequence is that of Protein turtle homolog A (Igsf9) from Rattus norvegicus (Rat).